The sequence spans 181 residues: ATP-dependent protease subunit HslV (181 aa).

Thr-7 is an active-site residue. Positions 166, 169, and 172 each coordinate Na(+).

This sequence belongs to the peptidase T1B family. HslV subfamily. In terms of assembly, a double ring-shaped homohexamer of HslV is capped on each side by a ring-shaped HslU homohexamer. The assembly of the HslU/HslV complex is dependent on binding of ATP.

It is found in the cytoplasm. It carries out the reaction ATP-dependent cleavage of peptide bonds with broad specificity.. Its activity is regulated as follows. Allosterically activated by HslU binding. In terms of biological role, protease subunit of a proteasome-like degradation complex believed to be a general protein degrading machinery. The chain is ATP-dependent protease subunit HslV from Variovorax paradoxus (strain S110).